The primary structure comprises 266 residues: Mitochondrial intermembrane space import and assembly protein 40 (266 aa).

Residues 1–28 (MFRQVSVRALRRAAGRSVCASRAQMVRH) constitute a mitochondrion transit peptide. Topologically, residues 29 to 44 (SSTLGGGKGSYNLDMP) are mitochondrial matrix. Residues 45 to 61 (ALALAAGVTLLAGYMVY) form a helical; Signal-anchor for type II membrane protein membrane-spanning segment. Over 62-266 (PRAPKAKQAA…AESAKSDEGH (205 aa)) the chain is Mitochondrial intermembrane. Over residues 87 to 98 (ASLQASAPVQAT) the composition is skewed to polar residues. Residues 87 to 180 (ASLQASAPVQ…GQQGAYNPDT (94 aa)) form a disordered region. Composition is skewed to low complexity over residues 130 to 157 (AEVGETQAEQAPAVETEQAAEAEQAAEA) and 165 to 175 (AGEAAQGQQGA). Intrachain disulfides connect Cys-187–Cys-189, Cys-198–Cys-231, and Cys-208–Cys-221. In terms of domain architecture, CHCH spans 195–239 (HGPCGEEFKAAFACFVYSEAEPKGIDCVEKFQVMQDCFRQHPEHY). Short sequence motifs (cx9C motif) lie at residues 198 to 208 (CGEEFKAAFAC) and 221 to 231 (CVEKFQVMQDC). The segment at 242–266 (QLESEEQAVRETEAAAESAKSDEGH) is disordered. The segment covering 248–266 (QAVRETEAAAESAKSDEGH) has biased composition (basic and acidic residues).

In terms of assembly, monomer. Cu(2+) is required as a cofactor. Requires Zn(2+) as cofactor.

The protein resides in the mitochondrion inner membrane. In terms of biological role, required for the import and folding of small cysteine-containing proteins (small Tim) in the mitochondrial intermembrane space (IMS). Forms a redox cycle with ERV1 that involves a disulfide relay system. Precursor proteins to be imported into the IMS are translocated in their reduced form into the mitochondria. The oxidized form of MIA40 forms a transient intermolecular disulfide bridge with the reduced precursor protein, resulting in oxidation of the precursor protein that now contains an intramolecular disulfide bond and is able to undergo folding in the IMS. In Eremothecium gossypii (strain ATCC 10895 / CBS 109.51 / FGSC 9923 / NRRL Y-1056) (Yeast), this protein is Mitochondrial intermembrane space import and assembly protein 40 (MIA40).